The chain runs to 336 residues: Coproporphyrin III ferrochelatase (336 aa).

S52 and Y116 together coordinate Fe-coproporphyrin III. Positions 176 and 259 each coordinate Fe(2+).

This sequence belongs to the ferrochelatase family.

It localises to the cytoplasm. The enzyme catalyses Fe-coproporphyrin III + 2 H(+) = coproporphyrin III + Fe(2+). It participates in porphyrin-containing compound metabolism; protoheme biosynthesis. Functionally, involved in coproporphyrin-dependent heme b biosynthesis. Catalyzes the insertion of ferrous iron into coproporphyrin III to form Fe-coproporphyrin III. The polypeptide is Coproporphyrin III ferrochelatase (Mycobacterium leprae (strain Br4923)).